Consider the following 314-residue polypeptide: Oxalate oxidoreductase subunit beta (314 aa).

[4Fe-4S] cluster contacts are provided by Cys-24, Cys-27, Cys-52, and Cys-225.

Dimer of heterotrimer of one alpha, one beta and one delta subunit. [4Fe-4S] cluster serves as cofactor.

It carries out the reaction oxidized 2[4Fe-4S]-[ferredoxin] + oxalate = reduced 2[4Fe-4S]-[ferredoxin] + 2 CO2. Functionally, catalyzes the anaerobic oxidation of oxalate using a broad range of electron acceptors, including ferredoxin and the nickel-dependent carbon monoxide dehydrogenase. Does not require coenzyme A as cosubstrate. Enables anaerobic growth on oxalate which is used as energy source by the bacteria. The sequence is that of Oxalate oxidoreductase subunit beta from Moorella thermoacetica (strain ATCC 39073 / JCM 9320).